Consider the following 155-residue polypeptide: Small ribosomal subunit protein uS7cz/uS7cy (155 aa).

Belongs to the universal ribosomal protein uS7 family. As to quaternary structure, part of the 30S ribosomal subunit.

The protein resides in the plastid. The protein localises to the chloroplast. In terms of biological role, one of the primary rRNA binding proteins, it binds directly to 16S rRNA where it nucleates assembly of the head domain of the 30S subunit. The chain is Small ribosomal subunit protein uS7cz/uS7cy (rps7-A) from Guizotia abyssinica (Niger).